The sequence spans 476 residues: Probable isoprenylcysteine alpha-carbonyl methylesterase ICMEL1 (476 aa).

The span at N92–T104 shows a compositional bias: polar residues. The tract at residues N92–T116 is disordered. A run of 2 helical transmembrane segments spans residues F153–Y173 and V208–L228. Residues G214–A216 and Q285–A287 contribute to the substrate site. Catalysis depends on residues S286, D388, and H420.

This sequence belongs to the AB hydrolase superfamily. Isoprenylcysteine methylesterase family. In terms of tissue distribution, expressed in roots, rosette and cauline leaves, stems, flowers and siliques.

Its subcellular location is the endoplasmic reticulum membrane. The protein resides in the golgi apparatus membrane. The enzyme catalyses [protein]-C-terminal S-[(2E,6E)-farnesyl]-L-cysteine methyl ester + H2O = [protein]-C-terminal S-[(2E,6E)-farnesyl]-L-cysteine + methanol + H(+). Catalyzes the demethylation of isoprenylcysteine methylesters. May be involved in the regulation of ABA signaling. The chain is Probable isoprenylcysteine alpha-carbonyl methylesterase ICMEL1 from Arabidopsis thaliana (Mouse-ear cress).